The following is a 1545-amino-acid chain: ATP-binding cassette sub-family C member 9 (1545 aa).

The Extracellular portion of the chain corresponds to 1–30; it reads MSLSFCGNNISSYNIYHGVLQNPCFVDALN. Asparagine 9 carries N-linked (GlcNAc...) asparagine glycosylation. Residues 31–51 traverse the membrane as a helical segment; it reads LVPHVFLLFITFPILFIGWGS. Topologically, residues 52-72 are cytoplasmic; the sequence is QSSKVQIHHNTWLHFPGHNLR. Residues 73–93 traverse the membrane as a helical segment; that stretch reads WILTFALLFVHVCEIAEGIVS. The Extracellular portion of the chain corresponds to 94–101; the sequence is DSQRASRH. Residues 102-122 traverse the membrane as a helical segment; it reads LHLFMPAVMGFVATTTSIVYY. The Cytoplasmic portion of the chain corresponds to 123–132; it reads HNIETSNFPK. The chain crosses the membrane as a helical span at residues 133 to 153; the sequence is LLLALFLYWVMAFITKTIKLV. Residues 154-167 are Extracellular-facing; sequence KYWQLGWGMSDLRF. The helical transmembrane segment at 168–188 threads the bilayer; the sequence is CITGVMVILNGLLMAVEINVI. Topologically, residues 189–301 are cytoplasmic; that stretch reads RVRRYVFFMN…AFGRPILLSS (113 aa). One can recognise an ABC transmembrane type-1 1 domain in the interval 297–594; it reads ILLSSTFRYL…LSTVVRFAVK (298 aa). A helical transmembrane segment spans residues 302 to 322; sequence TFRYLADLLGFAGPLCISGIV. The Extracellular portion of the chain corresponds to 323-347; sequence QRVNEPKNNTTRFSETLSSKEFLEN. Residues asparagine 330 and asparagine 331 are each glycosylated (N-linked (GlcNAc...) asparagine). The chain crosses the membrane as a helical span at residues 348 to 368; sequence AHVLAVLLFLALILQRTFLQA. Topologically, residues 369–420 are cytoplasmic; sequence SYYVTIETGINLRGALLAMIYNKILRLSTSNLSMGEMTLGQINNLVAIETNQ. The chain crosses the membrane as a helical span at residues 421–441; it reads LMWFLFLCPNLWAMPVQIIMG. Residues 442-452 are Extracellular-facing; that stretch reads VILLYNLLGSS. A helical membrane pass occupies residues 453 to 473; it reads ALVGAAVIVLLAPIQYFIATK. Topologically, residues 474–528 are cytoplasmic; it reads LAEAQKSTLDYSTERLKKTNEILKGIKLLKLYAWEHIFCKSVEETRMKELSSLKT. A helical transmembrane segment spans residues 529-549; sequence FALYTSLSIFMNAAIPIAAVL. Over 550 to 568 the chain is Extracellular; the sequence is ATFVTHAYASGNNLKPAEA. Residues 569-589 form a helical membrane-spanning segment; sequence FASLSLFHILVTPLFLLSTVV. Residues 590-986 are Cytoplasmic-facing; the sequence is RFAVKAIISV…TCWWYLTSGG (397 aa). An ABC transporter 1 domain is found at 668–908; sequence IKVTNGYFSW…DVELYEHWKT (241 aa). An ATP-binding site is contributed by 701-708; it reads GQVGCGKS. A disordered region spans residues 940–963; that stretch reads REAKAQMEDEDEEEEEEEDEDDNM. Residues 947–962 show a composition bias toward acidic residues; that stretch reads EDEDEEEEEEEDEDDN. The chain crosses the membrane as a helical span at residues 987–1007; sequence FFLLFLMIFSKLLKHSVIVAI. The ABC transmembrane type-1 2 domain occupies 990–1270; sequence LFLMIFSKLL…VVRNLADLEV (281 aa). The Extracellular portion of the chain corresponds to 1008–1030; sequence DYWLATWTSEYSINDPGKADQTF. The chain crosses the membrane as a helical span at residues 1031 to 1051; sequence YVAGFSILCGAGIFLCLVTSL. The Cytoplasmic portion of the chain corresponds to 1052–1123; sequence TVEWMGLTAA…TLLCLSAIGM (72 aa). The helical transmembrane segment at 1124 to 1144 threads the bilayer; sequence ISYATPVFLIALAPLGVAFYF. The Extracellular segment spans residues 1145-1241; that stretch reads IQKYFRVASK…IASISGSSNS (97 aa). The helical transmembrane segment at 1242–1262 threads the bilayer; it reads GLVGLGLLYALTITNYLNWVV. Over 1263 to 1545 the chain is Cytoplasmic; that stretch reads RNLADLEVQM…LFSTLVMTNK (283 aa). An ABC transporter 2 domain is found at 1308-1542; sequence IKIHDLCVRY…KNGLFSTLVM (235 aa). 1342–1349 provides a ligand contact to ATP; the sequence is GRTGSGKS.

This sequence belongs to the ABC transporter superfamily. ABCC family. Conjugate transporter (TC 3.A.1.208) subfamily. In terms of assembly, interacts with KCNJ11. Interacts with KCNJ8. Expressed at high levels in heart, skeletal muscle and ovary. Moderate levels are found in brain, tongue and pancreatic islets. Low levels are found in lung, testis and adrenal gland. Expressed at very low levels in stomach, colon, thyroid and pituitary.

It is found in the membrane. Its function is as follows. Subunit of ATP-sensitive potassium channels (KATP). Can form cardiac and smooth muscle-type KATP channels with KCNJ11. KCNJ11 forms the channel pore while ABCC9 is required for activation and regulation. Can form a sulfonylurea-sensitive but ATP-insensitive potassium channel with KCNJ8. The chain is ATP-binding cassette sub-family C member 9 (Abcc9) from Rattus norvegicus (Rat).